Consider the following 128-residue polypeptide: Arginine decarboxylase proenzyme (128 aa).

The active-site Schiff-base intermediate with substrate; via pyruvic acid is the Ser76. Ser76 carries the pyruvic acid (Ser); by autocatalysis modification. The Proton acceptor; for processing activity role is filled by His81. The Proton donor; for catalytic activity role is filled by Cys96.

The protein belongs to the prokaryotic AdoMetDC family. Type 1 subfamily. Heterooctamer of four alpha and four beta chains arranged as a tetramer of alpha/beta heterodimers. It depends on pyruvate as a cofactor. Post-translationally, is synthesized initially as an inactive proenzyme. Formation of the active enzyme involves a self-maturation process in which the active site pyruvoyl group is generated from an internal serine residue via an autocatalytic post-translational modification. Two non-identical subunits are generated from the proenzyme in this reaction, and the pyruvate is formed at the N-terminus of the alpha chain, which is derived from the carboxyl end of the proenzyme. The post-translation cleavage follows an unusual pathway, termed non-hydrolytic serinolysis, in which the side chain hydroxyl group of the serine supplies its oxygen atom to form the C-terminus of the beta chain, while the remainder of the serine residue undergoes an oxidative deamination to produce ammonia and the pyruvoyl group blocking the N-terminus of the alpha chain.

The enzyme catalyses L-arginine + H(+) = agmatine + CO2. Its pathway is amine and polyamine biosynthesis; agmatine biosynthesis; agmatine from L-arginine: step 1/1. Functionally, specifically catalyzes the decarboxylation of L-arginine to agmatine. Has no S-adenosylmethionine decarboxylase (AdoMetDC) activity. The chain is Arginine decarboxylase proenzyme from Metallosphaera sedula (strain ATCC 51363 / DSM 5348 / JCM 9185 / NBRC 15509 / TH2).